The following is a 270-amino-acid chain: Putative phosphoenolpyruvate synthase regulatory protein (270 aa).

Residue 150 to 157 (GVSRCGKT) participates in ADP binding.

Belongs to the pyruvate, phosphate/water dikinase regulatory protein family. PSRP subfamily.

It catalyses the reaction [pyruvate, water dikinase] + ADP = [pyruvate, water dikinase]-phosphate + AMP + H(+). The catalysed reaction is [pyruvate, water dikinase]-phosphate + phosphate + H(+) = [pyruvate, water dikinase] + diphosphate. Bifunctional serine/threonine kinase and phosphorylase involved in the regulation of the phosphoenolpyruvate synthase (PEPS) by catalyzing its phosphorylation/dephosphorylation. The polypeptide is Putative phosphoenolpyruvate synthase regulatory protein (Shewanella amazonensis (strain ATCC BAA-1098 / SB2B)).